The chain runs to 144 residues: Large ribosomal subunit protein uL15 (144 aa).

The tract at residues 1-57 (MKLNDLSPAPGSRREKHRPGRGIGSGLGKTGGRGHKGQTSRSGGTIAPGFEGGQQPL) is disordered. Residues 21 to 31 (RGIGSGLGKTG) show a composition bias toward gly residues.

The protein belongs to the universal ribosomal protein uL15 family. Part of the 50S ribosomal subunit.

In terms of biological role, binds to the 23S rRNA. The chain is Large ribosomal subunit protein uL15 from Pseudomonas fluorescens (strain ATCC BAA-477 / NRRL B-23932 / Pf-5).